Here is a 485-residue protein sequence, read N- to C-terminus: NADH-quinone oxidoreductase subunit N (485 aa).

A run of 14 helical transmembrane segments spans residues 8–28 (LIALLPLLIVGLTVVVVMLSI), 35–55 (FLNATLSVIGLNAALVSLWFV), 71–91 (GFAMLYTGLVLLASLATCTFA), 105–125 (FYLLVLIAALGGILLANANHL), 127–147 (SLFLGIELISLPLFGLVGYAF), 159–179 (YTILSAAASSFLLFGMALVYA), 203–223 (LLAGFGLMIVGLGFKLSLVPF), 235–255 (PAPVSTFLATASKIAIFGVVM), 271–291 (VVLAIIAFASIIFGNLMALSQ), 297–317 (LLGYSSISHLGYLLVALIALQ), 326–346 (VGVYLAGYLFSSLGAFGVVSL), 373–393 (AAVMTVMMLSLAGIPMTLGFI), 408–430 (WWLVGAVVVGSASGLYYYLRVAV), and 455–475 (IVVLISALLVLVLGVWPQPLI).

It belongs to the complex I subunit 2 family. As to quaternary structure, NDH-1 is composed of 13 different subunits. Subunits NuoA, H, J, K, L, M, N constitute the membrane sector of the complex.

It is found in the cell inner membrane. The enzyme catalyses a quinone + NADH + 5 H(+)(in) = a quinol + NAD(+) + 4 H(+)(out). In terms of biological role, NDH-1 shuttles electrons from NADH, via FMN and iron-sulfur (Fe-S) centers, to quinones in the respiratory chain. The immediate electron acceptor for the enzyme in this species is believed to be ubiquinone. Couples the redox reaction to proton translocation (for every two electrons transferred, four hydrogen ions are translocated across the cytoplasmic membrane), and thus conserves the redox energy in a proton gradient. The polypeptide is NADH-quinone oxidoreductase subunit N (Shigella sonnei (strain Ss046)).